The following is a 348-amino-acid chain: A-type ATP synthase subunit C (348 aa).

The protein belongs to the V-ATPase V0D/AC39 subunit family. Has multiple subunits with at least A(3), B(3), C, D, E, F, H, I and proteolipid K(x).

The protein localises to the cell membrane. Component of the A-type ATP synthase that produces ATP from ADP in the presence of a proton gradient across the membrane. This is A-type ATP synthase subunit C from Haloferax volcanii (strain ATCC 29605 / DSM 3757 / JCM 8879 / NBRC 14742 / NCIMB 2012 / VKM B-1768 / DS2) (Halobacterium volcanii).